A 356-amino-acid chain; its full sequence is 3-isopropylmalate dehydrogenase (356 aa).

Arg95, Arg105, Arg133, and Asp223 together coordinate substrate. Asp223, Asp247, and Asp251 together coordinate Mg(2+). Residue 281-293 participates in NAD(+) binding; it reads GSAPDIAGQNKAN.

Belongs to the isocitrate and isopropylmalate dehydrogenases family. LeuB type 1 subfamily. Homodimer. Requires Mg(2+) as cofactor. Mn(2+) serves as cofactor.

Its subcellular location is the cytoplasm. It catalyses the reaction (2R,3S)-3-isopropylmalate + NAD(+) = 4-methyl-2-oxopentanoate + CO2 + NADH. The protein operates within amino-acid biosynthesis; L-leucine biosynthesis; L-leucine from 3-methyl-2-oxobutanoate: step 3/4. Catalyzes the oxidation of 3-carboxy-2-hydroxy-4-methylpentanoate (3-isopropylmalate) to 3-carboxy-4-methyl-2-oxopentanoate. The product decarboxylates to 4-methyl-2 oxopentanoate. This is 3-isopropylmalate dehydrogenase from Neisseria meningitidis serogroup A / serotype 4A (strain DSM 15465 / Z2491).